The following is a 149-amino-acid chain: Transcriptional repressor NrdR (149 aa).

A zinc finger lies at 3-34 (CPFCAAEETKVVDSRLAADGYQIRRRRECTSC). The 91-residue stretch at 49 to 139 (PYVIKNNGNR…VYLSFDDIEE (91 aa)) folds into the ATP-cone domain.

It belongs to the NrdR family. Zn(2+) serves as cofactor.

Negatively regulates transcription of bacterial ribonucleotide reductase nrd genes and operons by binding to NrdR-boxes. This is Transcriptional repressor NrdR from Actinobacillus pleuropneumoniae serotype 3 (strain JL03).